The primary structure comprises 465 residues: Cysteine--tRNA ligase (465 aa).

C30 is a Zn(2+) binding site. Residues I32–H42 carry the 'HIGH' region motif. Residues C214, H239, and E243 each contribute to the Zn(2+) site. The 'KMSKS' region signature appears at K271–S275. K274 serves as a coordination point for ATP.

It belongs to the class-I aminoacyl-tRNA synthetase family. As to quaternary structure, monomer. Zn(2+) is required as a cofactor.

Its subcellular location is the cytoplasm. The catalysed reaction is tRNA(Cys) + L-cysteine + ATP = L-cysteinyl-tRNA(Cys) + AMP + diphosphate. This chain is Cysteine--tRNA ligase, found in Burkholderia ambifaria (strain ATCC BAA-244 / DSM 16087 / CCUG 44356 / LMG 19182 / AMMD) (Burkholderia cepacia (strain AMMD)).